Reading from the N-terminus, the 130-residue chain is Small ribosomal subunit protein uS9 (130 aa).

Residues 109-130 (RMKERKKYGLKGARRAPQFSKR) form a disordered region. Positions 111–130 (KERKKYGLKGARRAPQFSKR) are enriched in basic residues.

Belongs to the universal ribosomal protein uS9 family.

The chain is Small ribosomal subunit protein uS9 from Listeria innocua serovar 6a (strain ATCC BAA-680 / CLIP 11262).